The following is a 493-amino-acid chain: Glutamyl-tRNA(Gln) amidotransferase subunit A (493 aa).

Active-site charge relay system residues include Lys79 and Ser159. Ser183 (acyl-ester intermediate) is an active-site residue.

The protein belongs to the amidase family. GatA subfamily. Heterotrimer of A, B and C subunits.

It catalyses the reaction L-glutamyl-tRNA(Gln) + L-glutamine + ATP + H2O = L-glutaminyl-tRNA(Gln) + L-glutamate + ADP + phosphate + H(+). Allows the formation of correctly charged Gln-tRNA(Gln) through the transamidation of misacylated Glu-tRNA(Gln) in organisms which lack glutaminyl-tRNA synthetase. The reaction takes place in the presence of glutamine and ATP through an activated gamma-phospho-Glu-tRNA(Gln). The protein is Glutamyl-tRNA(Gln) amidotransferase subunit A of Sinorhizobium medicae (strain WSM419) (Ensifer medicae).